Reading from the N-terminus, the 250-residue chain is Ribosomal RNA small subunit methyltransferase J (250 aa).

S-adenosyl-L-methionine-binding positions include 101–102 (RD), 117–118 (ER), 153–154 (SS), and aspartate 171.

Belongs to the methyltransferase superfamily. RsmJ family.

Its subcellular location is the cytoplasm. The enzyme catalyses guanosine(1516) in 16S rRNA + S-adenosyl-L-methionine = N(2)-methylguanosine(1516) in 16S rRNA + S-adenosyl-L-homocysteine + H(+). Functionally, specifically methylates the guanosine in position 1516 of 16S rRNA. The sequence is that of Ribosomal RNA small subunit methyltransferase J from Escherichia coli (strain UTI89 / UPEC).